Here is a 504-residue protein sequence, read N- to C-terminus: Galactan beta-1,4-galactosyltransferase GALS3 (504 aa).

A helical membrane pass occupies residues 30-50 (LTFMALLVLCTLATLLPFIPS). In terms of domain architecture, GT92 spans 242-456 (DYLYCGSSLY…YHGSISQRRE (215 aa)).

Belongs to the glycosyltransferase 92 family. Expressed in root caps, mature leaves, top of the stems and seeds.

It localises to the golgi apparatus membrane. In terms of biological role, involved in the biosynthesis of beta-1,4-galactan. Beta-1,4-galactans are abundant polysaccharides in plant cell walls and are found as side-chain of rhamnogalacturonan I, which is a major component of pectin. The chain is Galactan beta-1,4-galactosyltransferase GALS3 from Arabidopsis thaliana (Mouse-ear cress).